The sequence spans 280 residues: Acetylglutamate kinase (280 aa).

Substrate-binding positions include 64–65, R86, and N179; that span reads GG.

The protein belongs to the acetylglutamate kinase family. ArgB subfamily.

It is found in the cytoplasm. The catalysed reaction is N-acetyl-L-glutamate + ATP = N-acetyl-L-glutamyl 5-phosphate + ADP. The protein operates within amino-acid biosynthesis; L-arginine biosynthesis; N(2)-acetyl-L-ornithine from L-glutamate: step 2/4. Its function is as follows. Catalyzes the ATP-dependent phosphorylation of N-acetyl-L-glutamate. The chain is Acetylglutamate kinase from Campylobacter fetus subsp. fetus (strain 82-40).